A 1293-amino-acid chain; its full sequence is Enterobactin synthase component F (1293 aa).

The tract at residues 1–301 (MSQHLPLVAA…NVLPLGIHIA (301 aa)) is elongation/condensation. The segment at 482 to 887 (SYREMREQVV…ALPDVEQAVT (406 aa)) is adenylatione. Residues 971-1046 (APKAGSETII…KLATIIDAEE (76 aa)) form the Carrier domain. Serine 1006 bears the O-(pantetheine 4'-phosphoryl)serine mark. The thioesterase stretch occupies residues 1066 to 1293 (PTLFCFHPAS…GPIIRATLNR (228 aa)). The active-site Proton acceptor; for thioesterase activity is the histidine 1271.

This sequence belongs to the ATP-dependent AMP-binding enzyme family. EntF subfamily. Proteins EntB, EntD, EntE and EntF are the component of the enterobactin synthase. Components probably do not form a stable complex. EntF acts as a catalytic monomer. Interacts with the MbtH-like protein YbdZ. YbdZ binds to the adenylation domain, but does not alter the structure of the domain. Pantetheine 4'-phosphate is required as a cofactor. Post-translationally, 4'-phosphopantetheine is transferred from CoA to a specific serine of apo-EntF by EntD. Holo-EntF so formed is then acylated with seryl-AMP.

Its subcellular location is the cytoplasm. It carries out the reaction 3 2,3-dihydroxybenzoate + 3 L-serine + 6 ATP = enterobactin + 6 AMP + 6 diphosphate + 4 H(+). The catalysed reaction is holo-[peptidyl-carrier protein] + L-serine + ATP = L-seryl-[peptidyl-carrier protein] + AMP + diphosphate. It participates in siderophore biosynthesis; enterobactin biosynthesis. Adenylation activity is increased in the presence of the MbtH-like protein YbdZ. Functionally, involved in the biosynthesis of the siderophore enterobactin (enterochelin), which is a macrocyclic trimeric lactone of N-(2,3-dihydroxybenzoyl)-serine. EntF catalyzes the activation of L-serine via ATP-dependent PPi exchange reaction to form seryladenylate. Activated L-serine is loaded onto the peptidyl carrier domain via a thioester linkage to the phosphopanthetheine moiety, forming seryl-S-Ppant-EntF. EntF acts then as the sole catalyst for the formation of the three amide and three ester linkages found in enterobactin, using seryladenylate and 2,3-dihydroxybenzoate-S-Ppant-EntB (DHB-S-Ppant-EntB) as substrates, via the formation of a DHB-Ser-S-Ppant-EntF intermediate. This is Enterobactin synthase component F from Escherichia coli (strain K12).